The chain runs to 244 residues: PQQPFPLQPQQSFLWQSQQPFLQQPQQPSPQPQQVVQIISPATPTTIPSAGKPTSAPFPQQQQQHQQLAQQQIPVVQPSILQQLNPCKVFLQQQCSPVAMPQRLARSQMLQQSSCHVMQQQCCQQLPQIPQQSRYQAIRAIIYSIILQEQQQVQGSIQSQQQQPQQLGQCVSQPQQQSQQQLGQQPQQQQLAQGTFLQPHQIAQLEVMTSIALRILPTMCSVNVPLYRTTTSVPFGVGTGVGAY.

The disordered stretch occupies residues 18–64 (QQPFLQQPQQPSPQPQQVVQIISPATPTTIPSAGKPTSAPFPQQQQQ). The span at 35–48 (VVQIISPATPTTIP) shows a compositional bias: polar residues.

It belongs to the gliadin/glutenin family.

Its function is as follows. Gliadin is the major seed storage protein in wheat. This is Gamma-gliadin from Triticum aestivum (Wheat).